The following is a 490-amino-acid chain: MARFGTQKLYIDGAYVDAGSDATFEAINPATGEVLAHVQRATQADVEKAVESAERGQKVWAAMTAMQRSRILRRAVDILRERNDELAMLETLDTGKSYSETRYVDIVTGADVLEYYAGLVPAIEGEQIPLRESSFVYTRREPLGVTVGIGAWNYPIQIALWKSAPALAAGNAMIFKPSEVTSLTTLKLAEIFTEAGLPNGVFNVLTGSGREVGTWLTEHPRIEKVSFTGGTTTGKKVMASASSSSLKEVTMELGGKSPLIICDDADLDKAADIAMMANFYSSGQVCTNGTRVFVPAAMKAAFEAKIAERVARIRAGNPEDENTNFGPLVSFQHMESVLSYIAKGKEEGARVLCGGERLTAGDFAKGAFVAPTVFTDCTDDMTIVKEEIFGPVMSILSYETEEEVIRRANDTEYGLAAGVCTNDISRAHRIIHKLEAGICWINAWGESPAEMPVGGYKQSGVGRENGVSSLAQYTRIKSVQVELGGYNSVF.

K(+)-binding residues include Ile-27 and Asp-93. Gly-150–Trp-152 serves as a coordination point for NAD(+). Lys-162 serves as the catalytic Charge relay system. Residue Lys-176 to Glu-179 participates in NAD(+) binding. Position 180 (Val-180) interacts with K(+). Gly-230–Thr-233 lines the NAD(+) pocket. Leu-246 lines the K(+) pocket. Glu-252 serves as the catalytic Proton acceptor. NAD(+)-binding residues include Gly-254, Cys-286, and Glu-387. The Nucleophile role is filled by Cys-286. Residue Cys-286 is modified to Cysteine sulfenic acid (-SOH). Residues Lys-457 and Gly-460 each contribute to the K(+) site. Glu-464 serves as the catalytic Charge relay system.

Belongs to the aldehyde dehydrogenase family. In terms of assembly, dimer of dimers. It depends on K(+) as a cofactor.

The catalysed reaction is betaine aldehyde + NAD(+) + H2O = glycine betaine + NADH + 2 H(+). It functions in the pathway amine and polyamine biosynthesis; betaine biosynthesis via choline pathway; betaine from betaine aldehyde: step 1/1. Involved in the biosynthesis of the osmoprotectant glycine betaine. Catalyzes the irreversible oxidation of betaine aldehyde to the corresponding acid. The polypeptide is Betaine aldehyde dehydrogenase (Pseudomonas entomophila (strain L48)).